The chain runs to 426 residues: Gamma-glutamyl phosphate reductase (426 aa).

It belongs to the gamma-glutamyl phosphate reductase family.

It is found in the cytoplasm. It carries out the reaction L-glutamate 5-semialdehyde + phosphate + NADP(+) = L-glutamyl 5-phosphate + NADPH + H(+). It functions in the pathway amino-acid biosynthesis; L-proline biosynthesis; L-glutamate 5-semialdehyde from L-glutamate: step 2/2. Catalyzes the NADPH-dependent reduction of L-glutamate 5-phosphate into L-glutamate 5-semialdehyde and phosphate. The product spontaneously undergoes cyclization to form 1-pyrroline-5-carboxylate. The protein is Gamma-glutamyl phosphate reductase of Cupriavidus necator (strain ATCC 17699 / DSM 428 / KCTC 22496 / NCIMB 10442 / H16 / Stanier 337) (Ralstonia eutropha).